The following is a 230-amino-acid chain: NEDD8-conjugating enzyme Ubc12 (230 aa).

The disordered stretch occupies residues 1–87; it reads MFRLKELQKK…AELRAQKDID (87 aa). A compositionally biased stretch (low complexity) spans 10 to 20; that stretch reads KQQQQQQQQQQ. Over residues 26-36 the composition is skewed to polar residues; that stretch reads TNGTDAVTTEP. Over residues 37–57 the composition is skewed to basic and acidic residues; sequence TDVKRQNSNDLKEIRKQKSKD. The segment covering 61–70 has biased composition (polar residues); it reads SLKTKQSSES. The region spanning 77-221 is the UBC core domain; that stretch reads PAELRAQKDI…VRQSLRGGYI (145 aa). Cys-159 serves as the catalytic Glycyl thioester intermediate.

This sequence belongs to the ubiquitin-conjugating enzyme family. UBC12 subfamily.

The catalysed reaction is [E1 NEDD8-activating enzyme]-S-[NEDD8 protein]-yl-L-cysteine + [E2 NEDD8-conjugating enzyme]-L-cysteine = [E1 NEDD8-activating enzyme]-L-cysteine + [E2 NEDD8-conjugating enzyme]-S-[NEDD8-protein]-yl-L-cysteine.. The protein operates within protein modification; protein neddylation. Functionally, accepts the ubiquitin-like protein nedd8 from the uba3-nae1 E1 complex and catalyzes its covalent attachment to other proteins. The polypeptide is NEDD8-conjugating enzyme Ubc12 (ube2m) (Dictyostelium discoideum (Social amoeba)).